The sequence spans 142 residues: MFQGASALTLDAKGRMSIPSRHREALQLQAEGRVTVTKHPDGCLMLFPRPEWERFRERIAALPMEAHWWKRIFLGSAADVELDTAGRVLITPELRAAASLERDVMLLGMGSHFEVWDAATYTAKEQAAMAQGMPDALKNFSF.

SpoVT-AbrB domains lie at 5–51 (ASAL…PRPE) and 77–120 (AADV…DAAT).

Belongs to the MraZ family. In terms of assembly, forms oligomers.

Its subcellular location is the cytoplasm. The protein resides in the nucleoid. The protein is Transcriptional regulator MraZ of Ralstonia pickettii (strain 12J).